An 841-amino-acid chain; its full sequence is MLGLLRKIVGDPAQKQLKKNEKIVDQVEALADEMKQLSDEQLKNKTTEFKAKLEEGASLNDIVVPALAVAREAAGRVLNEYPYRVQLLGALALHQGNIAEMKTGEGKTLVGTIAVYVQALEGKGVHIVTVNNYLARRDLENYGRIFQFLGLTVGLNENGLTREEKQKAYAADVTYSTNNELGFDYLRDNMVLYKEQMVQRPLHFALIDEVDSILIDEARTPLIISGSVERKTKLYGQANTFVRVLKRDADYTYDEKTKSVQLTDEGVNKAERAFNIDNLYDQKHVQLNHHINQSLKAHVAMHRDADYVVEDGEVVIVDQFTGRLMKGRRYSDGLHQALEAKEGLEVQRESITLASITFQNYFRMYQKLAGMTGTAKTEEEEFRNIYGMDVMVIPTNKPVAREDRPDLIYKTMQGKFNAVVNEIAELHKTGRPVLVGTVNVETSEVVSKMLTRKRIPHHVLNAKNHEREAEIIEKAGHKGAVTIATNMAGRGTDIKLGPGVKELGGLHVLGTERHESRRIDNQLRGRAGRQGDVGSSQFYLSMEDELMRRFGSDNMKAMMEKLGMEDDQPIESSLVSRAVETAQKRVEGNNFDARKQVLQFDDVMREQREIIYRQRMEVLEADNLKTIVENMMKATVERVVQTHCPESLVQEEWDLAAVATYINGQLLSENGISEKELKGKEQEELIELITEKVLAAYHAKEAEVSSEQMREFEKVIMLRTVDRKWMNHIDQMDQLRQGIHLRAYGQNDPLREYRFEGFNMFEAMIAEIEEEVSMYVMKAQVQQNLKREEVAEGKAVRPSANGQEDKKAKRKPVRKAENIGRNDPCICGSGKKYKNCCGANR.

Residues glutamine 86, 104-108, and aspartate 493 contribute to the ATP site; that span reads GEGKT. The interval 788 to 822 is disordered; the sequence is EEVAEGKAVRPSANGQEDKKAKRKPVRKAENIGRN. Positions 825, 827, 836, and 837 each coordinate Zn(2+).

Belongs to the SecA family. In terms of assembly, monomer and homodimer. Part of the essential Sec protein translocation apparatus which comprises SecA, SecYEG and auxiliary proteins SecDF. Other proteins may also be involved. The cofactor is Zn(2+).

Its subcellular location is the cell membrane. It localises to the cytoplasm. It catalyses the reaction ATP + H2O + cellular proteinSide 1 = ADP + phosphate + cellular proteinSide 2.. Part of the Sec protein translocase complex. Interacts with the SecYEG preprotein conducting channel. Has a central role in coupling the hydrolysis of ATP to the transfer of proteins into and across the cell membrane, serving as an ATP-driven molecular motor driving the stepwise translocation of polypeptide chains across the membrane. This Shouchella clausii (strain KSM-K16) (Alkalihalobacillus clausii) protein is Protein translocase subunit SecA.